Reading from the N-terminus, the 2293-residue chain is Protein Ycf2 B (2293 aa).

1647 to 1654 (GSIGTGRS) serves as a coordination point for ATP.

The protein belongs to the Ycf2 family.

The protein resides in the plastid. The protein localises to the chloroplast stroma. Its function is as follows. Probable ATPase of unknown function. Its presence in a non-photosynthetic plant (Epifagus virginiana) and experiments in tobacco indicate that it has an essential function which is probably not related to photosynthesis. The sequence is that of Protein Ycf2 B from Crucihimalaya wallichii (Rock-cress).